The chain runs to 697 residues: MARKTPIERYRNIGIMAHIDAGKTTTTERILYYTGVSHKLGEVHDGAATMDWMEQEQERGITITSAATTCFWSGMARQFPEHRINIIDTPGHVDFTIEVERSLRVLDGAVAVFCAVGGVEPQSETVWRQANKYKVPRLAFVNKMDRQGADFLRVVGQIRSRLGANPIPIQIPIGAEENFEGVVDLIKMKAIHWDKSSMGMAFEEKEIPGNLQASCDEYREKMIEAAAEASEELMERYLEEGQLPLDDIVKGLRIRTLNGEIVPALCGSAFKNKGVQAMLDAVLSYMPSPVEVPPIKGVQKDETEGERHASDEEPFAALAFKIASDPYVGNLTFFRVYSGVLSSGDTVYNAASGNRERIGRLLQMHSNSREEIKDVMAGDIAAAVGLKNVTTGDTLCDPNHIILLERMEFPEPVISVAIEPKTKGDQERMSIALGKLAREDPSFRVRTDEESGQTIIAGMGELHLDIIVDRMRREFKVEANVGAPQVAYRETIRRSIEQEGKFVRQSGGRGQYGHVWLKLEPQERGKGYEFVNKIVGGTVPKEFIPAVDKGIKEQTENGVIAGYPVVDIKATLYDGSYHDVDSSEMAFKIAGSMAFKEGVQKANPVLLEPIMKVEVVTPEEYMGDVMGDLNRRRGMVQGMEDSLSGKIIRAEVPLAEMFGYATDLRSATQGRANYTMEFSKYNEAPSNIAGAIIKKSQ.

Positions 8–290 (ERYRNIGIMA…AVLSYMPSPV (283 aa)) constitute a tr-type G domain. GTP-binding positions include 17–24 (AHIDAGKT), 88–92 (DTPGH), and 142–145 (NKMD).

This sequence belongs to the TRAFAC class translation factor GTPase superfamily. Classic translation factor GTPase family. EF-G/EF-2 subfamily.

The protein localises to the cytoplasm. Catalyzes the GTP-dependent ribosomal translocation step during translation elongation. During this step, the ribosome changes from the pre-translocational (PRE) to the post-translocational (POST) state as the newly formed A-site-bound peptidyl-tRNA and P-site-bound deacylated tRNA move to the P and E sites, respectively. Catalyzes the coordinated movement of the two tRNA molecules, the mRNA and conformational changes in the ribosome. This is Elongation factor G from Nitrosococcus oceani (strain ATCC 19707 / BCRC 17464 / JCM 30415 / NCIMB 11848 / C-107).